Consider the following 175-residue polypeptide: Large ribosomal subunit protein uL10 (175 aa).

The protein belongs to the universal ribosomal protein uL10 family. As to quaternary structure, part of the ribosomal stalk of the 50S ribosomal subunit. The N-terminus interacts with L11 and the large rRNA to form the base of the stalk. The C-terminus forms an elongated spine to which L12 dimers bind in a sequential fashion forming a multimeric L10(L12)X complex.

Functionally, forms part of the ribosomal stalk, playing a central role in the interaction of the ribosome with GTP-bound translation factors. This chain is Large ribosomal subunit protein uL10, found in Psychrobacter cryohalolentis (strain ATCC BAA-1226 / DSM 17306 / VKM B-2378 / K5).